The following is a 408-amino-acid chain: Multidrug resistance protein MdtG (408 aa).

11 consecutive transmembrane segments (helical) span residues 16–36, 58–78, 92–112, 115–135, 146–166, 173–193, 224–244, 253–273, 290–310, 319–339, and 378–398; these read LIVA…VMPF, IVFS…GGLA, LGMG…QFLI, ALLG…ATQV, TLST…GLLA, PVFF…LLCI, LFVT…ILTL, VGNI…AALL, ILIA…FVQT, FLLG…LVYN, and AVFL…WNSL.

The protein belongs to the major facilitator superfamily. DHA1 family. MdtG (TC 2.A.1.2.20) subfamily.

It localises to the cell inner membrane. In terms of biological role, confers resistance to fosfomycin and deoxycholate. The protein is Multidrug resistance protein MdtG of Escherichia fergusonii (strain ATCC 35469 / DSM 13698 / CCUG 18766 / IAM 14443 / JCM 21226 / LMG 7866 / NBRC 102419 / NCTC 12128 / CDC 0568-73).